A 315-amino-acid polypeptide reads, in one-letter code: MSESLKIIFAGTPDFAARHLDALLSSGHQVVGVFTQPDRPAGRGNRVTASPVKQLAAQHNIPVFQPESLRSEENQQKVAALNADVMVVVAYGLILPKLVLEMPRHGCINVHGSLLPRWRGAAPIQRSLWAGDAETGVTIMQMDIGLDTGDMLHKLSCPIEAADTSATLYDKLADLGPAGLLTTLAQLADGSARPQVQDESLVSYAEKLSKEEARLDWSLSAQQLERCIRAFNPWPISYFVIDEQPVKVWKASVLPAVNGHQPGEILQANKQGIQVVTADGVLNIEELQPAGKKAMKAQDLLNSRREWFTPGNIIA.

Residue 113 to 116 (SLLP) coordinates (6S)-5,6,7,8-tetrahydrofolate.

The protein belongs to the Fmt family.

The catalysed reaction is L-methionyl-tRNA(fMet) + (6R)-10-formyltetrahydrofolate = N-formyl-L-methionyl-tRNA(fMet) + (6S)-5,6,7,8-tetrahydrofolate + H(+). Functionally, attaches a formyl group to the free amino group of methionyl-tRNA(fMet). The formyl group appears to play a dual role in the initiator identity of N-formylmethionyl-tRNA by promoting its recognition by IF2 and preventing the misappropriation of this tRNA by the elongation apparatus. The polypeptide is Methionyl-tRNA formyltransferase (Erwinia tasmaniensis (strain DSM 17950 / CFBP 7177 / CIP 109463 / NCPPB 4357 / Et1/99)).